We begin with the raw amino-acid sequence, 172 residues long: Large ribosomal subunit protein uL10 (172 aa).

Belongs to the universal ribosomal protein uL10 family. As to quaternary structure, part of the ribosomal stalk of the 50S ribosomal subunit. The N-terminus interacts with L11 and the large rRNA to form the base of the stalk. The C-terminus forms an elongated spine to which L12 dimers bind in a sequential fashion forming a multimeric L10(L12)X complex.

Functionally, forms part of the ribosomal stalk, playing a central role in the interaction of the ribosome with GTP-bound translation factors. The protein is Large ribosomal subunit protein uL10 of Bartonella henselae (strain ATCC 49882 / DSM 28221 / CCUG 30454 / Houston 1) (Rochalimaea henselae).